Consider the following 1435-residue polypeptide: MEEHVFGVQQIQPNVISVRLFKRKVGGLGFLVKERVSKPPVIISDLIRGGAAEQSGLIQAGDIILAVNGRPLVDLSYDSALEVLRGVASETHVVLILRGPEGFTTNLETTFTGDGTPKTIRVTQPLGAPTKAVDLSHQPPSAGKEQPRPVDGAAGPGSWPQPTQGHGQEAGSPSRANGLAPRTSSQDPAKKSGWAGLQGSGDKNELLKEIEPVLTLLAGGSKAVDGGGPAKAETRDTGVQVDRDFDAKSHKPLPLGVENDRVFSDLWGKGSAPVVLNNPYSEKEQPPASGKQSPTKNGSPSKCPRFLKVKNWETDVVLTDTLHLKSTLETGCTEHICMGSIMFPSQHTRRPEDIRTKEQLFPLAKEFIDQYYSSIKRFGSKAHMERLEEVNKEIESTSTYQLKDTELIYGAKHAWRNASRCVGRIQWSKLQVFDARDCTTAHGMFNYICNHIKYATNKGNLRSAITIFPQRTDGKHDFRVWNSQLIRYAGYKQPDGSTLGDPANVQFTEICIQQGWKPPRSRFDVLPLLLQANGNDPELFQIPPELVLEVPIRHPKFEWFKDLGLKWYGLPAVSNMLLEIGGLEFSACPFSGWYMGTEIGVRDYCDNSRYNILEEVAKKMNLDMRKTSSLWKDQALVEINIAVLYSFQSDKVTIVDHHSATESFIKHMENEYRCRGGCPADWVWIVPPMSGSITPVFHQEMLNYRLTPCFEYQPDPWNTHVWKGTNGTPTKRRAIGFKKLAEAVKFSAKLMGQAMAKRVKATILYATETGKSQAYAKTLCEIFKHAFDAKVMSMEEYDIVHLEHETLVLVVTSTFGNGDPPENGEKFRCALMEMRHPNSLQEERKSYKVRFNSVSSYSDSRKSSGDGPDVRDHFESAGPLANVRFSVFGLGSRAYPHFCAFGHAVDTLLEELGGERILKMREGDELCGQEEAFRTWAKKVFKAACDVFCVGDDVNIEKANNSLISNDRSWKRNKFRLTYVAEAPGLTQGLSSVHKKRVSAARLLSRQNLQSPKSSRSTIFVRLHTNGSQELQYQPGDHLGVFPGNHEDLVNALIERLEDAPPANQMVKVELLEERNTALGVISNWKDEPRLPPCTVFQAFKYYLDITTPPTPLQLQQFASLASNEKEKQRLLVLSKGLQEYEEWKWGKNPTIVEVLEEFPSIQMPATLLLTQLSLLQPRYYSISSSPDMYPDEVHLTVAIVSYHTRDGEGPIHHGVCSSWLNRIPADEVVPCFVRGAPSFRLPRNPQVPCILVGPGTAFAPFRSFWQQRQFDIQHKGMSPCPMVLVFGCRQSKIDHIYREEALQAKNKGVFRELYTAYSREPDKPKKYVQDILQEQLAEQVYRALKEQGGHIYVCGDVTMAADVLKAVQRIMAQQGKLSAEDAGVFISRLRDDNRYHEDIFGVTLRTYEVTNRLRSESIAFIEESKKDTDEVFSS.

Positions 1–206 are interaction with NOSIP; it reads MEEHVFGVQQ…LQGSGDKNEL (206 aa). A PDZ domain is found at 17-99; that stretch reads SVRLFKRKVG…ETHVVLILRG (83 aa). 2 disordered regions span residues 110-201 and 277-304; these read TFTG…QGSG and NNPYSEKEQPPASGKQSPTKNGSPSKCP. The interaction with DYNLL1/PIN stretch occupies residues 164-246; that stretch reads QGHGQEAGSP…TGVQVDRDFD (83 aa). Positions 290 to 300 are enriched in polar residues; the sequence is GKQSPTKNGSP. Residue serine 340 coordinates (6R)-L-erythro-5,6,7,8-tetrahydrobiopterin. Residue cysteine 421 coordinates heme b. L-arginine is bound by residues glutamine 484, tryptophan 593, tyrosine 594, and glutamate 598. The (6R)-L-erythro-5,6,7,8-tetrahydrobiopterin site is built by valine 683, tryptophan 684, and phenylalanine 697. Position 712 (tyrosine 712) interacts with heme b. Residues 731–751 are calmodulin-binding; sequence KRRAIGFKKLAEAVKFSAKLM. Residues 761–941 form the Flavodoxin-like domain; it reads ATILYATETG…AFRTWAKKVF (181 aa). Residues threonine 767, glutamate 768, threonine 769, lysine 771, serine 772, serine 813, threonine 814, and glycine 818 each contribute to the FMN site. A phosphoserine mark is found at serine 853, serine 863, and serine 864. Serine 892, histidine 897, cysteine 899, glutamate 925, and glutamine 929 together coordinate FMN. An FAD-binding FR-type domain is found at 996-1243; sequence KRVSAARLLS…VRGAPSFRLP (248 aa). An NADP(+)-binding site is contributed by arginine 1016. Histidine 1038, arginine 1179, tyrosine 1180, tyrosine 1181, serine 1182, threonine 1197, and alanine 1199 together coordinate FAD. Residue serine 1202 coordinates NADP(+). Residues tyrosine 1203, valine 1216, cysteine 1217, and serine 1218 each coordinate FAD. Residues threonine 1257, arginine 1290, serine 1319, arginine 1320, lysine 1326, tyrosine 1328, glutamine 1330, aspartate 1363, threonine 1404, and arginine 1406 each contribute to the NADP(+) site.

It belongs to the NOS family. In terms of assembly, homodimer. Interacts with DLG4; the interaction possibly being prevented by the association between NOS1 and CAPON. Forms a ternary complex with CAPON and RASD1. Forms a ternary complex with CAPON and SYN1. Interacts with ZDHHC23. Interacts with NOSIP; which may impair its synaptic location. Interacts with HTR4. Interacts with SLC6A4. Interacts with VAC14. Interacts (via N-terminal domain) with DLG4 (via N-terminal tandem pair of PDZ domains). Interacts with SLC6A4. Forms a complex with ASL, ASS1 and SLC7A1; the complex regulates cell-autonomous L-arginine synthesis and citrulline recycling while channeling extracellular L-arginine to nitric oxide synthesis pathway. Interacts with DMD; localizes NOS1 to sarcolemma in muscle cells. Interacts with DYNLL1; inhibits the nitric oxide synthase activity. Heme b serves as cofactor. The cofactor is FAD. It depends on FMN as a cofactor. (6R)-L-erythro-5,6,7,8-tetrahydrobiopterin is required as a cofactor. In terms of processing, ubiquitinated; mediated by STUB1/CHIP in the presence of Hsp70 and Hsp40 (in vitro).

It is found in the cell membrane. The protein localises to the sarcolemma. It localises to the cell projection. Its subcellular location is the dendritic spine. The enzyme catalyses 2 L-arginine + 3 NADPH + 4 O2 + H(+) = 2 L-citrulline + 2 nitric oxide + 3 NADP(+) + 4 H2O. Stimulated by calcium/calmodulin. Inhibited by DYNLL1 that prevents the dimerization of the protein. Inhibited by NOSIP. Functionally, produces nitric oxide (NO) which is a messenger molecule with diverse functions throughout the body. In the brain and peripheral nervous system, NO displays many properties of a neurotransmitter. Probably has nitrosylase activity and mediates cysteine S-nitrosylation of cytoplasmic target proteins such SRR. The sequence is that of Nitric oxide synthase 1 (NOS1) from Oryctolagus cuniculus (Rabbit).